We begin with the raw amino-acid sequence, 432 residues long: 3-phosphoshikimate 1-carboxyvinyltransferase (432 aa).

The 3-phosphoshikimate site is built by lysine 22, serine 23, and arginine 27. Lysine 22 provides a ligand contact to phosphoenolpyruvate. Phosphoenolpyruvate contacts are provided by glycine 96 and arginine 127. Residues serine 173, serine 174, glutamine 175, serine 201, aspartate 316, asparagine 339, and lysine 343 each coordinate 3-phosphoshikimate. Glutamine 175 contacts phosphoenolpyruvate. The active-site Proton acceptor is aspartate 316. Phosphoenolpyruvate is bound by residues arginine 347, arginine 391, and lysine 416.

Belongs to the EPSP synthase family. As to quaternary structure, monomer.

It localises to the cytoplasm. It carries out the reaction 3-phosphoshikimate + phosphoenolpyruvate = 5-O-(1-carboxyvinyl)-3-phosphoshikimate + phosphate. The protein operates within metabolic intermediate biosynthesis; chorismate biosynthesis; chorismate from D-erythrose 4-phosphate and phosphoenolpyruvate: step 6/7. Catalyzes the transfer of the enolpyruvyl moiety of phosphoenolpyruvate (PEP) to the 5-hydroxyl of shikimate-3-phosphate (S3P) to produce enolpyruvyl shikimate-3-phosphate and inorganic phosphate. The polypeptide is 3-phosphoshikimate 1-carboxyvinyltransferase (Haemophilus influenzae (strain 86-028NP)).